Reading from the N-terminus, the 551-residue chain is Chaperonin GroEL (551 aa).

ATP is bound by residues 30-33 (TLGP), K51, 87-91 (DGTTT), G415, 481-483 (NAA), and D497.

Belongs to the chaperonin (HSP60) family. As to quaternary structure, forms a cylinder of 14 subunits composed of two heptameric rings stacked back-to-back. Interacts with the co-chaperonin GroES.

The protein localises to the cytoplasm. The catalysed reaction is ATP + H2O + a folded polypeptide = ADP + phosphate + an unfolded polypeptide.. Together with its co-chaperonin GroES, plays an essential role in assisting protein folding. The GroEL-GroES system forms a nano-cage that allows encapsulation of the non-native substrate proteins and provides a physical environment optimized to promote and accelerate protein folding. The sequence is that of Chaperonin GroEL from Magnetococcus marinus (strain ATCC BAA-1437 / JCM 17883 / MC-1).